We begin with the raw amino-acid sequence, 312 residues long: DNA-directed RNA polymerase subunit alpha (312 aa).

Positions 1–229 (MLQYQIDRID…ELFQPLATVT (229 aa)) are alpha N-terminal domain (alpha-NTD). An alpha C-terminal domain (alpha-CTD) region spans residues 240-312 (PSPEAQIPLE…ISIPQSRTSV (73 aa)).

This sequence belongs to the RNA polymerase alpha chain family. In cyanobacteria the RNAP catalytic core is composed of 2 alpha, 1 beta, 1 beta', 1 gamma and 1 omega subunit. When a sigma factor is associated with the core the holoenzyme is formed, which can initiate transcription.

The enzyme catalyses RNA(n) + a ribonucleoside 5'-triphosphate = RNA(n+1) + diphosphate. Functionally, DNA-dependent RNA polymerase catalyzes the transcription of DNA into RNA using the four ribonucleoside triphosphates as substrates. The chain is DNA-directed RNA polymerase subunit alpha from Prochlorococcus marinus (strain AS9601).